We begin with the raw amino-acid sequence, 333 residues long: Replication factor C subunit 2 (333 aa).

Ala2 bears the N-acetylalanine mark. 55-62 is an ATP binding site; sequence GPPGTGKT.

The protein belongs to the activator 1 small subunits family. As to quaternary structure, heterotetramer of subunits RFC2, RFC3, RFC4 and RFC5 that can form a complex with RFC1.

Its subcellular location is the nucleus. Functionally, may be involved in DNA replication and thus regulate cell proliferation. The polypeptide is Replication factor C subunit 2 (RFC2) (Arabidopsis thaliana (Mouse-ear cress)).